The following is a 131-amino-acid chain: Small ribosomal subunit protein uS11 (131 aa).

The protein belongs to the universal ribosomal protein uS11 family. Part of the 30S ribosomal subunit. Interacts with proteins S7 and S18. Binds to IF-3.

Functionally, located on the platform of the 30S subunit, it bridges several disparate RNA helices of the 16S rRNA. Forms part of the Shine-Dalgarno cleft in the 70S ribosome. This is Small ribosomal subunit protein uS11 from Neisseria gonorrhoeae (strain ATCC 700825 / FA 1090).